Reading from the N-terminus, the 349-residue chain is Sperm acrosomal protein FSA-ACR.1 (349 aa).

A signal peptide spans 1-8 (MKEVYLVG). Residues 1-265 (MKEVYLVGYA…EQPSGIPPSS (265 aa)) form a disordered region. The segment covering 63-114 (TSGEHTSVEHASAEHSSTEHTSGEHASGEHTSGERATGEHTSSEHATSEHTS) has biased composition (basic and acidic residues). Polar residues-rich tracts occupy residues 117–142 (QPSG…SGEQ) and 154–171 (SGEQ…TSGE). A compositionally biased stretch (basic and acidic residues) spans 178–189 (PSGEHAVAEKPS). The segment covering 221–248 (EQASIEKASSEQASAEQASAEQASSEQA) has biased composition (low complexity). An N-linked (GlcNAc...) asparagine glycan is attached at Asn342.

It to acrosomal proteins SP-10. As to expression, testis.

The protein resides in the cytoplasmic vesicle. It is found in the secretory vesicle. Its subcellular location is the acrosome. In Vulpes vulpes (Red fox), this protein is Sperm acrosomal protein FSA-ACR.1.